A 395-amino-acid polypeptide reads, in one-letter code: uncharacterized protein (395 aa).

The segment covering 286–306 (SSNKSSESTMTSPLDSASSLH) has biased composition (low complexity). A disordered region spans residues 286–395 (SSNKSSESTM…RNDDSGLESV (110 aa)). Residues 350–362 (RPPPPSVHPPIFP) are compositionally biased toward pro residues. Polar residues predominate over residues 364–385 (QTQLFHPPTYSTQRHVTSPNSS).

This is an uncharacterized protein from Caenorhabditis elegans.